Reading from the N-terminus, the 202-residue chain is Putative 3-methyladenine DNA glycosylase (202 aa).

The protein belongs to the DNA glycosylase MPG family.

This chain is Putative 3-methyladenine DNA glycosylase, found in Rhodopseudomonas palustris (strain BisB5).